The sequence spans 473 residues: Photosystem II CP43 reaction center protein (473 aa).

A propeptide spanning residues 1–14 is cleaved from the precursor; that stretch reads MKTLYSLRRFYPVE. The residue at position 15 (Thr-15) is an N-acetylthreonine. Thr-15 carries the post-translational modification Phosphothreonine. 5 helical membrane-spanning segments follow: residues 69 to 93, 134 to 155, 178 to 200, 255 to 275, and 291 to 312; these read LFEV…PHLA, LLGP…KDRN, KALY…RKIT, KPFA…LSYS, and WFNN…ASQA. Position 367 (Glu-367) interacts with [CaMn4O5] cluster. A helical transmembrane segment spans residues 447–471; it reads RARAAAAGFEKGIDRDFEPVLSMTP.

This sequence belongs to the PsbB/PsbC family. PsbC subfamily. PSII is composed of 1 copy each of membrane proteins PsbA, PsbB, PsbC, PsbD, PsbE, PsbF, PsbH, PsbI, PsbJ, PsbK, PsbL, PsbM, PsbT, PsbX, PsbY, PsbZ, Psb30/Ycf12, at least 3 peripheral proteins of the oxygen-evolving complex and a large number of cofactors. It forms dimeric complexes. The cofactor is Binds multiple chlorophylls and provides some of the ligands for the Ca-4Mn-5O cluster of the oxygen-evolving complex. It may also provide a ligand for a Cl- that is required for oxygen evolution. PSII binds additional chlorophylls, carotenoids and specific lipids..

It localises to the plastid. The protein localises to the chloroplast thylakoid membrane. Its function is as follows. One of the components of the core complex of photosystem II (PSII). It binds chlorophyll and helps catalyze the primary light-induced photochemical processes of PSII. PSII is a light-driven water:plastoquinone oxidoreductase, using light energy to abstract electrons from H(2)O, generating O(2) and a proton gradient subsequently used for ATP formation. In Gossypium hirsutum (Upland cotton), this protein is Photosystem II CP43 reaction center protein.